A 173-amino-acid polypeptide reads, in one-letter code: Putative metal-dependent hydrolase OB0413 (173 aa).

Zn(2+) is bound by residues His64, His155, and His159.

It belongs to the metal hydrolase YfiT family. As to quaternary structure, homodimer. Zn(2+) is required as a cofactor.

Its subcellular location is the cytoplasm. In terms of biological role, possible metal-dependent hydrolase. In Oceanobacillus iheyensis (strain DSM 14371 / CIP 107618 / JCM 11309 / KCTC 3954 / HTE831), this protein is Putative metal-dependent hydrolase OB0413.